An 85-amino-acid chain; its full sequence is MPKPEIHPTWYPDAKVICNGEVVMTTGSTQPEIHVDVWSGNHPFFTGTQKILDTEGRVDRFMRKYGMGGAGKAGEDKKAGDKADA.

The disordered stretch occupies residues 65–85 (YGMGGAGKAGEDKKAGDKADA). Over residues 73–85 (AGEDKKAGDKADA) the composition is skewed to basic and acidic residues.

This sequence belongs to the bacterial ribosomal protein bL31 family. Type A subfamily. Part of the 50S ribosomal subunit.

Binds the 23S rRNA. This is Large ribosomal subunit protein bL31 from Synechococcus sp. (strain WH7803).